The primary structure comprises 399 residues: Zinc finger HIT domain-containing protein 2 (399 aa).

Methionine 1 carries the N-acetylmethionine modification. Cysteine 7, cysteine 10, cysteine 22, cysteine 25, cysteine 30, cysteine 34, histidine 38, and cysteine 41 together coordinate Zn(2+). The HIT-type zinc finger occupies 7-41; that stretch reads CGFCPAGEALPARYTCPRCNAPYCSLRCYRAHGAC. Disordered regions lie at residues 70-97 and 152-175; these read RLRE…GLSG and AEPE…AEPF. Over residues 86-96 the composition is skewed to gly residues; that stretch reads LGPGARPGGLS. At threonine 161 the chain carries Phosphothreonine.

In terms of assembly, interacts (via HIT-type zinc finger) with RUVBL2 in the presence of ATP or ADP; shows a stronger interaction in the presence of ADP. As to expression, low expression in most tissues; highly expressed in testis; particularly in seminiferous tubules.

Functionally, may act as a bridging factor mediating the interaction between the R2TP/Prefoldin-like (R2TP/PFDL) complex and U5 small nuclear ribonucleoprotein (U5 snRNP). Required for the interaction of R2TP complex subunit RPAP3 and prefoldin-like subunit URI1 with U5 snRNP proteins EFTUD2 and PRPF8. May play a role in regulating the composition of the U5 snRNP complex. The chain is Zinc finger HIT domain-containing protein 2 (Znhit2) from Mus musculus (Mouse).